The sequence spans 322 residues: 3-hydroxyacyl-CoA dehydrogenase FVEG_12628 (322 aa).

Residues isoleucine 5–leucine 25 form a helical membrane-spanning segment. Glutamate 151 serves as the catalytic For hydroxyacyl-coenzyme A dehydrogenase activity.

Belongs to the 3-hydroxyacyl-CoA dehydrogenase family.

The protein localises to the membrane. 3-hydroxyacyl-CoA dehydrogenase; part of the Fusarium detoxification of benzoxazolinone cluster 2 (FDB2) involved in the degradation of benzoxazolinones produced by the host plant. Maize, wheat, and rye produce the 2 benzoxazinone phytoanticipins 2,4-dihy-droxy-7-methoxy-1,4-benzoxazin-3-one (DIMBOA) and 2,4-dihydroxy-1,4-benzoxazin-3-one (DIBOA) that, due to their inherent instability once released, spontaneously degrade to the more stable corresponding benzoxazolinones, 6-methoxy-2-benzoxazolinone (MBOA) and 2-benzoxazolinone (BOA), respectively. The first step in the detoxification of benzoxazolinones involves the hydrolysis of the cyclic ester bond of benzoxazolinones by the FDB1 cluster gamma-lactamase MBL1 to aminophenols. MBL1 is able to convert BOA into 2-aminophenol (2-AP), as well as MBOA into 5-methoxy-2-aminophenol (2-AMP). The FDB2 cluster N-malonyltransferase FDB2/NAT1 then metabolizes aminophenols via N-malonylation to non-toxic malonamic acids. FDB2/NAT1 converts 2-AP into N-(2-hydroxyphenyl) malonamic acid (HPMA) and 2-AMP into N-(2-hydroxy-4-methoxyphenyl) malonamic acid (HMPMA). The duplicated dienlactone hydrolases DLH1 and DLH2 may provide redundant function for hydrolyzing the lactone moiety in the BOA molecule. The roles of the amidases an other enzymes encoded by the 2 FDB clusters have not been identified so far. The protein is 3-hydroxyacyl-CoA dehydrogenase FVEG_12628 of Gibberella moniliformis (strain M3125 / FGSC 7600) (Maize ear and stalk rot fungus).